The chain runs to 299 residues: NAD kinase (299 aa).

Asp-78 acts as the Proton acceptor in catalysis. Residues 78 to 79 (DG), 151 to 152 (ND), Lys-162, Arg-179, Asp-181, 192 to 197 (TAYALS), and Gln-252 each bind NAD(+).

It belongs to the NAD kinase family. A divalent metal cation is required as a cofactor.

Its subcellular location is the cytoplasm. The enzyme catalyses NAD(+) + ATP = ADP + NADP(+) + H(+). Involved in the regulation of the intracellular balance of NAD and NADP, and is a key enzyme in the biosynthesis of NADP. Catalyzes specifically the phosphorylation on 2'-hydroxyl of the adenosine moiety of NAD to yield NADP. The sequence is that of NAD kinase from Coxiella burnetii (strain CbuG_Q212) (Coxiella burnetii (strain Q212)).